The chain runs to 204 residues: Pre-mRNA leakage protein 1 (204 aa).

Positions 104 to 172 constitute an FHA domain; that stretch reads YLVGRELGHS…NGTCLNNVVI (69 aa).

Belongs to the pre-mRNA retention and splicing (RES) complex composed of at least BUD13, IST3 and PML1.

Its subcellular location is the cytoplasm. The protein resides in the nucleus. Its function is as follows. Required for efficient splicing and pre-mRNA nuclear retention. The sequence is that of Pre-mRNA leakage protein 1 (PML1) from Saccharomyces cerevisiae (strain ATCC 204508 / S288c) (Baker's yeast).